A 911-amino-acid chain; its full sequence is Protein translocase subunit SecA (911 aa).

Residues Gln-87, Gly-105–Thr-109, and Asp-512 contribute to the ATP site. The tract at residues Ala-865–Asn-892 is disordered. Over residues Glu-873 to Val-883 the composition is skewed to low complexity. Zn(2+) is bound by residues Cys-895, Cys-897, Cys-906, and His-907.

This sequence belongs to the SecA family. Monomer and homodimer. Part of the essential Sec protein translocation apparatus which comprises SecA, SecYEG and auxiliary proteins SecDF-YajC and YidC. The cofactor is Zn(2+).

The protein localises to the cell inner membrane. It is found in the cytoplasm. The catalysed reaction is ATP + H2O + cellular proteinSide 1 = ADP + phosphate + cellular proteinSide 2.. In terms of biological role, part of the Sec protein translocase complex. Interacts with the SecYEG preprotein conducting channel. Has a central role in coupling the hydrolysis of ATP to the transfer of proteins into and across the cell membrane, serving both as a receptor for the preprotein-SecB complex and as an ATP-driven molecular motor driving the stepwise translocation of polypeptide chains across the membrane. The protein is Protein translocase subunit SecA of Ectopseudomonas mendocina (strain ymp) (Pseudomonas mendocina).